The primary structure comprises 503 residues: Glutamate--tRNA ligase (503 aa).

Residues 12–22 carry the 'HIGH' region motif; the sequence is PSPTGYLHVGG. A 'KMSKS' region motif is present at residues 259-263; that stretch reads KLSKR. Residue K262 participates in ATP binding.

Belongs to the class-I aminoacyl-tRNA synthetase family. Glutamate--tRNA ligase type 1 subfamily. As to quaternary structure, monomer.

It localises to the cytoplasm. It carries out the reaction tRNA(Glu) + L-glutamate + ATP = L-glutamyl-tRNA(Glu) + AMP + diphosphate. Catalyzes the attachment of glutamate to tRNA(Glu) in a two-step reaction: glutamate is first activated by ATP to form Glu-AMP and then transferred to the acceptor end of tRNA(Glu). This is Glutamate--tRNA ligase from Chlorobaculum parvum (strain DSM 263 / NCIMB 8327) (Chlorobium vibrioforme subsp. thiosulfatophilum).